The primary structure comprises 346 residues: Magnesium-protoporphyrin IX monomethyl ester [oxidative] cyclase (346 aa).

The protein belongs to the AcsF family. It depends on Fe cation as a cofactor.

The catalysed reaction is Mg-protoporphyrin IX 13-monomethyl ester + 3 NADPH + 3 O2 + 2 H(+) = 3,8-divinyl protochlorophyllide a + 3 NADP(+) + 5 H2O. It participates in porphyrin-containing compound metabolism; chlorophyll biosynthesis (light-independent). Its function is as follows. Catalyzes the formation of the isocyclic ring in chlorophyll biosynthesis. Mediates the cyclase reaction, which results in the formation of divinylprotochlorophyllide (Pchlide) characteristic of all chlorophylls from magnesium-protoporphyrin IX 13-monomethyl ester (MgPMME). This is Magnesium-protoporphyrin IX monomethyl ester [oxidative] cyclase from Gloeobacter violaceus (strain ATCC 29082 / PCC 7421).